The sequence spans 49 residues: MIQKPILLSSFLFLYIRALLHSIHPYIRTSVHLYTKKITSYNFLGVPFK.

Residues 1-22 (MIQKPILLSSFLFLYIRALLHS) form the signal peptide.

This is an uncharacterized protein from Saccharomyces cerevisiae (strain ATCC 204508 / S288c) (Baker's yeast).